The primary structure comprises 2169 residues: Protein sidekick-1 (2169 aa).

The signal sequence occupies residues 1 to 50 (MVGRKVDREIIARRNSRRDGMMMKLNFCFFFCRRWWAFLLLQLHMLQALA). At 51–1961 (QDDVAPYFKT…TEAPFYEEWW (1911 aa)) the chain is on the extracellular side. 5 consecutive Ig-like C2-type domains span residues 56–138 (PYFK…SEVQ), 143–229 (GNFM…SPLI), 245–333 (PIIV…AFIS), 338–428 (PYFT…LDVT), and 432–521 (PAFI…VMLT). An intrachain disulfide couples Cys-78 to Cys-121. N-linked (GlcNAc...) asparagine glycans are attached at residues Asn-93, Asn-223, and Asn-253. 3 cysteine pairs are disulfide-bonded: Cys-267–Cys-314, Cys-360–Cys-410, and Cys-453–Cys-505. N-linked (GlcNAc...) asparagine glycans are attached at residues Asn-502, Asn-524, and Asn-534. The Ig-like C2-type 6 domain maps to 525 to 615 (RTFIVHPPEN…GNDSRMARLE (91 aa)). A disulfide bridge connects residues Cys-547 and Cys-599. Asn-607, Asn-631, Asn-734, Asn-773, Asn-834, Asn-967, and Asn-977 each carry an N-linked (GlcNAc...) asparagine glycan. Fibronectin type-III domains lie at 622 to 718 (SPQN…LPEE), 723 to 819 (PPKN…TLQG), 824 to 922 (PPQN…TLED), 926 to 1020 (AVGH…VPPE), 1024 to 1123 (APSN…TLQA), 1128 to 1226 (APGS…TRES), 1231 to 1328 (PPEN…TKDD), 1332 to 1426 (PPIR…TEKR), 1431 to 1528 (PPQQ…TLQD), 1533 to 1651 (PPSS…VGEA), 1656 to 1752 (APQN…THQA), 1756 to 1851 (APSF…AGPA), and 1854 to 1955 (SPGS…TEAP). 2 N-linked (GlcNAc...) asparagine glycosylation sites follow: Asn-1234 and Asn-1285. Residues 1423–1443 (TEKRERPAPPQQLTTPQSDVS) are disordered. Over residues 1433-1443 (QQLTTPQSDVS) the composition is skewed to polar residues. 5 N-linked (GlcNAc...) asparagine glycosylation sites follow: Asn-1606, Asn-1700, Asn-1719, Asn-1771, and Asn-1845. Residues 1962–1982 (FLLVMALSSLILILLVVFALV) traverse the membrane as a helical segment. At 1983–2169 (LHGQSKKYKN…TPVTGFSSFV (187 aa)) the chain is on the cytoplasmic side. 2 disordered regions span residues 2028 to 2050 (TFSKKNGTRSPPRPSPGGLHYSD) and 2145 to 2169 (GGVYTPTGQPAPGSRTPVTGFSSFV). Over residues 2160 to 2169 (TPVTGFSSFV) the composition is skewed to polar residues. A PDZ-binding motif is present at residues 2163 to 2169 (TGFSSFV).

The protein belongs to the sidekick family. Homodimer; mediates homophilic interactions to promote cell adhesion. Expressed by non-overlapping subsets of retinal neurons. SDK1, SDK2, DSCAM and DSCAML1 are expressed in non-overlapping subsets of interneurons and retinal ganglion cells (RGCs) that form synapses in distinct inner plexiform layer (IPL) sublaminae.

Its subcellular location is the cell membrane. It is found in the synapse. Adhesion molecule that promotes lamina-specific synaptic connections in the retina. Expressed in specific subsets of interneurons and retinal ganglion cells (RGCs) and promotes synaptic connectivity via homophilic interactions. The protein is Protein sidekick-1 of Gallus gallus (Chicken).